The following is a 473-amino-acid chain: tRNA modification GTPase MnmE (473 aa).

Positions 28, 93, and 132 each coordinate (6S)-5-formyl-5,6,7,8-tetrahydrofolate. Positions 228–394 (GVATVLVGSP…LKQQMSNMVA (167 aa)) constitute a TrmE-type G domain. Residues 238-243 (NAGKST), 257-263 (SHQPGTT), and 282-285 (DTAG) each bind GTP. S242 and T263 together coordinate Mg(2+). K473 lines the (6S)-5-formyl-5,6,7,8-tetrahydrofolate pocket.

It belongs to the TRAFAC class TrmE-Era-EngA-EngB-Septin-like GTPase superfamily. TrmE GTPase family. As to quaternary structure, homodimer. Heterotetramer of two MnmE and two MnmG subunits. It depends on K(+) as a cofactor.

Its subcellular location is the cytoplasm. Exhibits a very high intrinsic GTPase hydrolysis rate. Involved in the addition of a carboxymethylaminomethyl (cmnm) group at the wobble position (U34) of certain tRNAs, forming tRNA-cmnm(5)s(2)U34. This Chlorobium chlorochromatii (strain CaD3) protein is tRNA modification GTPase MnmE.